Reading from the N-terminus, the 121-residue chain is Small ribosomal subunit protein uS13 (121 aa).

A disordered region spans residues 89–121 (MRHRRGLPVRGQNTKNNARTRKGKKVSIAGKKK). The segment covering 106-121 (ARTRKGKKVSIAGKKK) has biased composition (basic residues).

Belongs to the universal ribosomal protein uS13 family. In terms of assembly, part of the 30S ribosomal subunit. Forms a loose heterodimer with protein S19. Forms two bridges to the 50S subunit in the 70S ribosome.

Its function is as follows. Located at the top of the head of the 30S subunit, it contacts several helices of the 16S rRNA. In the 70S ribosome it contacts the 23S rRNA (bridge B1a) and protein L5 of the 50S subunit (bridge B1b), connecting the 2 subunits; these bridges are implicated in subunit movement. Contacts the tRNAs in the A and P-sites. This is Small ribosomal subunit protein uS13 from Latilactobacillus sakei subsp. sakei (strain 23K) (Lactobacillus sakei subsp. sakei).